The following is a 136-amino-acid chain: Protein PsiE (136 aa).

Transmembrane regions (helical) follow at residues 15-35 (ILQT…VVFL), 55-75 (YELV…ALIV), 82-102 (FHFP…RLII), and 108-128 (PLDV…LWLC).

It belongs to the PsiE family.

It localises to the cell inner membrane. In Escherichia coli O17:K52:H18 (strain UMN026 / ExPEC), this protein is Protein PsiE.